We begin with the raw amino-acid sequence, 491 residues long: Glutamyl-tRNA(Gln) amidotransferase subunit A (491 aa).

Residues Lys78 and Ser158 each act as charge relay system in the active site. The Acyl-ester intermediate role is filled by Ser182.

Belongs to the amidase family. GatA subfamily. As to quaternary structure, heterotrimer of A, B and C subunits.

The catalysed reaction is L-glutamyl-tRNA(Gln) + L-glutamine + ATP + H2O = L-glutaminyl-tRNA(Gln) + L-glutamate + ADP + phosphate + H(+). Its function is as follows. Allows the formation of correctly charged Gln-tRNA(Gln) through the transamidation of misacylated Glu-tRNA(Gln) in organisms which lack glutaminyl-tRNA synthetase. The reaction takes place in the presence of glutamine and ATP through an activated gamma-phospho-Glu-tRNA(Gln). This is Glutamyl-tRNA(Gln) amidotransferase subunit A from Afipia carboxidovorans (strain ATCC 49405 / DSM 1227 / KCTC 32145 / OM5) (Oligotropha carboxidovorans).